Reading from the N-terminus, the 303-residue chain is Coenzyme PQQ synthesis protein B (303 aa).

The protein belongs to the PqqB family.

It functions in the pathway cofactor biosynthesis; pyrroloquinoline quinone biosynthesis. Its function is as follows. May be involved in the transport of PQQ or its precursor to the periplasm. In Pseudomonas syringae pv. tomato (strain ATCC BAA-871 / DC3000), this protein is Coenzyme PQQ synthesis protein B.